Here is a 274-residue protein sequence, read N- to C-terminus: Undecaprenyl-diphosphatase (274 aa).

7 helical membrane passes run 4-24 (PLFV…FLPI), 41-61 (DATS…AVCW), 83-103 (FVGL…MFHS), 108-128 (LLFN…LILW), 184-204 (AAEF…VYDL), 218-238 (VFAI…KAFI), and 246-266 (FIAF…TWQL).

This sequence belongs to the UppP family.

It is found in the cell inner membrane. The catalysed reaction is di-trans,octa-cis-undecaprenyl diphosphate + H2O = di-trans,octa-cis-undecaprenyl phosphate + phosphate + H(+). Catalyzes the dephosphorylation of undecaprenyl diphosphate (UPP). Confers resistance to bacitracin. In Aromatoleum aromaticum (strain DSM 19018 / LMG 30748 / EbN1) (Azoarcus sp. (strain EbN1)), this protein is Undecaprenyl-diphosphatase.